The sequence spans 1145 residues: Cation channel sperm-associated auxiliary subunit gamma 2 (1145 aa).

The first 38 residues, 1 to 38 (MVSRPAMSPVSPVWPRKPNLWAFWVLRLVLLLSLKSWA), serve as a signal peptide directing secretion. Residues 39 to 1061 (EDALQHCTWL…IHGLPLSSKR (1023 aa)) lie on the Extracellular side of the membrane. 2 disulfide bridges follow: C45–C106 and C160–C166. N103 carries N-linked (GlcNAc...) asparagine glycosylation. N178 carries an N-linked (GlcNAc...) asparagine glycan. A disulfide bridge connects residues C289 and C344. N-linked (GlcNAc...) asparagine glycans are attached at residues N356, N402, N672, and N743. Disulfide bonds link C395-C403, C634-C856, C802-C830, C878-C1042, C905-C914, and C1006-C1012. N1038 carries N-linked (GlcNAc...) asparagine glycosylation. Residues 1062 to 1083 (TSFIVMVSTSFFIALVVFYILF) form a helical membrane-spanning segment. Residues 1084–1145 (CLVWPHIVKA…KEDNVQAKTA (62 aa)) lie on the Cytoplasmic side of the membrane.

This sequence belongs to the CATSPERG family. In terms of assembly, component of the CatSper complex or CatSpermasome composed of the core pore-forming members CATSPER1, CATSPER2, CATSPER3 and CATSPER4 as well as auxiliary members CATSPERB, CATSPERG2, CATSPERD, CATSPERE, CATSPERZ, C2CD6/CATSPERT, SLCO6C1, TMEM249, TMEM262 and EFCAB9. HSPA1 may be an additional auxiliary complex member. The core complex members CATSPER1, CATSPER2, CATSPER3 and CATSPER4 form a heterotetrameric channel. The auxiliary CATSPERB, CATSPERG2, CATSPERD and CATSPERE subunits form a pavilion-like structure over the pore which stabilizes the complex through interactions with CATSPER4, CATSPER3, CATSPER1 and CATSPER2 respectively. SLCO6C1 interacts with CATSPERE and TMEM262/CATSPERH interacts with CATSPERB, further stabilizing the complex. C2CD6/CATSPERT interacts at least with CATSPERD and is required for targeting the CatSper complex in the flagellar membrane. In terms of tissue distribution, testis-specific. Specifically expressed in the principal piece of the sperm tail (at protein level). Expressed in spermatocytes and spermatids within the seminiferous tubule but not in interstitial cells.

It is found in the cell projection. The protein localises to the cilium. It localises to the flagellum membrane. Auxiliary component of the CatSper complex, a complex involved in sperm cell hyperactivation. Sperm cell hyperactivation is needed for sperm motility which is essential late in the preparation of sperm for fertilization. The sequence is that of Cation channel sperm-associated auxiliary subunit gamma 2 from Mus musculus (Mouse).